Reading from the N-terminus, the 373-residue chain is Stationary phase protein 5 (373 aa).

Required for survival at high temperature during stationary phase. The polypeptide is Stationary phase protein 5 (SPG5) (Saccharomyces cerevisiae (strain ATCC 204508 / S288c) (Baker's yeast)).